A 96-amino-acid polypeptide reads, in one-letter code: Interleukin-8 (96 aa).

The signal sequence occupies residues 1-22 (MTSKLAIALLATFMLSAALCEA). A Citrulline modification is found at Arg27. Cystine bridges form between Cys34–Cys61 and Cys36–Cys78.

This sequence belongs to the intercrine alpha (chemokine CxC) family. As to quaternary structure, homodimer. Interacts with TNFAIP6 (via Link domain); this interaction interferes with chemokine binding to glycosaminoglycans. Citrullination at Arg-27 prevents proteolysis, and dampens tissue inflammation, it also enhances leukocytosis, possibly through impaired chemokine clearance from the blood circulation.

Its subcellular location is the secreted. In terms of biological role, chemotactic factor that mediates inflammatory response by attracting neutrophils, basophils, and T-cells to clear pathogens and protect the host from infection. Also plays an important role in neutrophil activation. Released in response to an inflammatory stimulus, exerts its effect by binding to the G-protein-coupled receptors CXCR1 and CXCR2, primarily found in neutrophils, monocytes and endothelial cells. G-protein heterotrimer (alpha, beta, gamma subunits) constitutively binds to CXCR1/CXCR2 receptor and activation by IL8 leads to beta and gamma subunits release from Galpha (GNAI2 in neutrophils) and activation of several downstream signaling pathways including PI3K and MAPK pathways. The polypeptide is Interleukin-8 (CXCL8) (Dasypus novemcinctus (Nine-banded armadillo)).